A 2368-amino-acid polypeptide reads, in one-letter code: Highly reducing polyketide synthase cla2 (2368 aa).

Residues 10 to 434 form the Ketosynthase family 3 (KS3) domain; sequence QIPIAIVGLG…GTNGLVVLEA (425 aa). Residues Cys182, His317, and His357 each act as for beta-ketoacyl synthase activity in the active site. Residues 548–877 are malonyl-CoA:ACP transacylase (MAT) domain; the sequence is FVFTGQGAQW…RGQNALDTSL (330 aa). The active-site For malonyltransferase activity is the Ser638. The tract at residues 936–1071 is N-terminal hotdog fold; the sequence is HSMIGLKQPM…GLVAIEYTNK (136 aa). A dehydratase (DH) domain region spans residues 936–1175; it reads HSMIGLKQPM…AIFQSIFGST (240 aa). Positions 936–1255 constitute a PKS/mFAS DH domain; sequence HSMIGLKQPM…MTEPEVGDDA (320 aa). His968 (proton acceptor; for dehydratase activity) is an active-site residue. The interval 1099-1255 is C-terminal hotdog fold; sequence PLMIRREKFY…MTEPEVGDDA (157 aa). The Proton donor; for dehydratase activity role is filled by Asp1165. Positions 1655–1967 are enoylreductase (ER) domain; the sequence is GFLDSLQFIK…QGKHRGKLVL (313 aa). Positions 1991–2170 are catalytic ketoreductase (KRc) domain; that stretch reads ATYLIIGGLG…AVAVNLTIIR (180 aa). In terms of domain architecture, Carrier spans 2283–2360; the sequence is QASEIITEGL…VLAKTIASRS (78 aa). Residue Ser2320 is modified to O-(pantetheine 4'-phosphoryl)serine.

The protein operates within secondary metabolite biosynthesis. Functionally, highly reducing polyketide synthase; part of the gene cluster that mediates the biosynthesis of cladosporin, a tricyclic octaketide that acts as an antimalarial agent though inhibition of the Plasmodium falciparum lysyl-tRNA synthetase. The highly reducing polyketide synthase cla2 is responsible for biosynthesis up to the pentaketide stage, including of the tetrahydropyran (THP) ring, whereas the three subsequent ketide extensions with no reduction are catalyzed by the non-reducing polyketide synthase cla3. In Cladosporium cladosporioides, this protein is Highly reducing polyketide synthase cla2.